Here is a 668-residue protein sequence, read N- to C-terminus: DNA ligase (668 aa).

Residues 32 to 36, 81 to 82, and E113 each bind NAD(+); these read DAEYD and SL. The N6-AMP-lysine intermediate role is filled by K115. 4 residues coordinate NAD(+): R136, E173, K289, and K313. Residues C407, C410, C425, and C431 each contribute to the Zn(2+) site. The 79-residue stretch at 590–668 folds into the BRCT domain; that stretch reads ASEQPFAGKT…EEELQQALQG (79 aa).

It belongs to the NAD-dependent DNA ligase family. LigA subfamily. Mg(2+) serves as cofactor. The cofactor is Mn(2+).

The catalysed reaction is NAD(+) + (deoxyribonucleotide)n-3'-hydroxyl + 5'-phospho-(deoxyribonucleotide)m = (deoxyribonucleotide)n+m + AMP + beta-nicotinamide D-nucleotide.. Its function is as follows. DNA ligase that catalyzes the formation of phosphodiester linkages between 5'-phosphoryl and 3'-hydroxyl groups in double-stranded DNA using NAD as a coenzyme and as the energy source for the reaction. It is essential for DNA replication and repair of damaged DNA. This Aeromonas hydrophila subsp. hydrophila (strain ATCC 7966 / DSM 30187 / BCRC 13018 / CCUG 14551 / JCM 1027 / KCTC 2358 / NCIMB 9240 / NCTC 8049) protein is DNA ligase.